The chain runs to 208 residues: MLSSQLSAYLAEMNLSATEQQQGQLVGFVEMLNKWNKAYNLTSVRSPEQMLIRHVMDSLTVSPYLSGKRFIDVGTGPGLPGIPLAIMNPDKEFVLLDSLGKRIRFQKQVQFELKINNISSVESRVEAFQPEIKFDGVLSRAFASVQDMLTWCHHLPHNEGIFYALKGQLNQVELEAIPEGFELLETIVLQVPQLDEQRHLLKLRKKLG.

Residues glycine 74, leucine 79, 125–126, and arginine 140 contribute to the S-adenosyl-L-methionine site; that span reads VE.

The protein belongs to the methyltransferase superfamily. RNA methyltransferase RsmG family.

It is found in the cytoplasm. It catalyses the reaction guanosine(527) in 16S rRNA + S-adenosyl-L-methionine = N(7)-methylguanosine(527) in 16S rRNA + S-adenosyl-L-homocysteine. Functionally, specifically methylates the N7 position of guanine in position 527 of 16S rRNA. The sequence is that of Ribosomal RNA small subunit methyltransferase G from Shewanella denitrificans (strain OS217 / ATCC BAA-1090 / DSM 15013).